Reading from the N-terminus, the 524-residue chain is Probable malate:quinone oxidoreductase (524 aa).

It belongs to the MQO family. The cofactor is FAD.

The enzyme catalyses (S)-malate + a quinone = a quinol + oxaloacetate. It participates in carbohydrate metabolism; tricarboxylic acid cycle; oxaloacetate from (S)-malate (quinone route): step 1/1. The chain is Probable malate:quinone oxidoreductase from Blochmanniella floridana.